Reading from the N-terminus, the 461-residue chain is L-seryl-tRNA(Sec) selenium transferase (461 aa).

N6-(pyridoxal phosphate)lysine is present on lysine 294.

It belongs to the SelA family. It depends on pyridoxal 5'-phosphate as a cofactor.

Its subcellular location is the cytoplasm. The catalysed reaction is L-seryl-tRNA(Sec) + selenophosphate + H(+) = L-selenocysteinyl-tRNA(Sec) + phosphate. It participates in aminoacyl-tRNA biosynthesis; selenocysteinyl-tRNA(Sec) biosynthesis; selenocysteinyl-tRNA(Sec) from L-seryl-tRNA(Sec) (bacterial route): step 1/1. Converts seryl-tRNA(Sec) to selenocysteinyl-tRNA(Sec) required for selenoprotein biosynthesis. The protein is L-seryl-tRNA(Sec) selenium transferase of Haemophilus influenzae (strain ATCC 51907 / DSM 11121 / KW20 / Rd).